An 873-amino-acid polypeptide reads, in one-letter code: Mitogen-activated protein kinase kinase kinase kinase 3 (873 aa).

Methionine 1 carries the N-acetylmethionine modification. The Protein kinase domain occupies 16–273 (FELIQRIGSG…AEKLLQHPFV (258 aa)). Residues 22 to 30 (IGSGTYGDV) and lysine 45 contribute to the ATP site. The active-site Proton acceptor is the aspartate 136. Phosphoserine occurs at positions 329 and 377. Residues 389–518 (AHLEDDEGDD…KPISNGLPPT (130 aa)) are disordered. The segment covering 452–466 (HVPPRPPPPRLPPQK) has biased composition (pro residues). The span at 487–499 (VHQQQSEQRGTNL) shows a compositional bias: polar residues. The 312-residue stretch at 535 to 846 (PLKIHCATSW…IFRLLGSDRV (312 aa)) folds into the CNH domain.

It belongs to the protein kinase superfamily. STE Ser/Thr protein kinase family. STE20 subfamily. In terms of assembly, interacts with SH3GL2. Interaction appears to regulate MAP4K3-mediated JNK activation. It depends on Mg(2+) as a cofactor.

The catalysed reaction is L-seryl-[protein] + ATP = O-phospho-L-seryl-[protein] + ADP + H(+). It carries out the reaction L-threonyl-[protein] + ATP = O-phospho-L-threonyl-[protein] + ADP + H(+). Serine/threonine kinase that plays a role in the response to environmental stress. Appears to act upstream of the JUN N-terminal pathway. Activator of the Hippo signaling pathway which plays a pivotal role in organ size control and tumor suppression by restricting proliferation and promoting apoptosis. MAP4Ks act in parallel to and are partially redundant with STK3/MST2 and STK4/MST2 in the phosphorylation and activation of LATS1/2, and establish MAP4Ks as components of the expanded Hippo pathway. The polypeptide is Mitogen-activated protein kinase kinase kinase kinase 3 (Map4k3) (Rattus norvegicus (Rat)).